Reading from the N-terminus, the 291-residue chain is G1/S-specific cyclin-D1 (291 aa).

Position 282 is a phosphothreonine (Thr282).

This sequence belongs to the cyclin family. Cyclin D subfamily. In terms of assembly, interacts with the cdk4 and cdk6 protein kinases to form a serine/threonine kinase holoenzyme complex. The cyclin subunit imparts substrate specificity to the complex. In terms of processing, phosphorylation at Thr-282 by MAP kinases is required for ubiquitination and degradation by the DCX(AMBRA1) complex. Ubiquitinated by the DCX(AMBRA1) complex during the transition from G1 to S cell phase, leading to its degradation. The DCX(AMBRA1) complex represents the major regulator of CCND1 stability during the G1/S transition.

The protein localises to the nucleus. The protein resides in the cytoplasm. Regulatory component of the cyclin D1-CDK4 (DC) complex that phosphorylates and inhibits members of the retinoblastoma (RB) protein family including RB1 and regulates the cell-cycle during G(1)/S transition. Phosphorylation of RB1 allows dissociation of the transcription factor E2F from the RB/E2F complex and the subsequent transcription of E2F target genes which are responsible for the progression through the G(1) phase. Hypophosphorylates RB1 in early G(1) phase. Cyclin D-CDK4 complexes are major integrators of various mitogenenic and antimitogenic signals. This is G1/S-specific cyclin-D1 (ccnd1) from Xenopus laevis (African clawed frog).